Consider the following 193-residue polypeptide: Pyridoxal 5'-phosphate synthase subunit PdxT (193 aa).

L-glutamine is bound at residue G50–S52. Catalysis depends on C82, which acts as the Nucleophile. Residues R109 and I136–R137 contribute to the L-glutamine site. Catalysis depends on charge relay system residues H172 and E174.

This sequence belongs to the glutaminase PdxT/SNO family. In the presence of PdxS, forms a dodecamer of heterodimers. Only shows activity in the heterodimer.

It catalyses the reaction aldehydo-D-ribose 5-phosphate + D-glyceraldehyde 3-phosphate + L-glutamine = pyridoxal 5'-phosphate + L-glutamate + phosphate + 3 H2O + H(+). It carries out the reaction L-glutamine + H2O = L-glutamate + NH4(+). It participates in cofactor biosynthesis; pyridoxal 5'-phosphate biosynthesis. Its function is as follows. Catalyzes the hydrolysis of glutamine to glutamate and ammonia as part of the biosynthesis of pyridoxal 5'-phosphate. The resulting ammonia molecule is channeled to the active site of PdxS. The protein is Pyridoxal 5'-phosphate synthase subunit PdxT of Streptococcus pneumoniae (strain JJA).